The sequence spans 205 residues: uncharacterized protein (205 aa).

Residues 26-129 enclose the HD domain; that stretch reads DWHHVSRVAD…VQDADRLDAI (104 aa).

This is an uncharacterized protein from Bacillus subtilis (strain 168).